Reading from the N-terminus, the 495-residue chain is Glycogen synthase (495 aa).

Lysine 15 provides a ligand contact to ADP-alpha-D-glucose.

The protein belongs to the glycosyltransferase 1 family. Bacterial/plant glycogen synthase subfamily.

It catalyses the reaction [(1-&gt;4)-alpha-D-glucosyl](n) + ADP-alpha-D-glucose = [(1-&gt;4)-alpha-D-glucosyl](n+1) + ADP + H(+). The protein operates within glycan biosynthesis; glycogen biosynthesis. Synthesizes alpha-1,4-glucan chains using ADP-glucose. In Variovorax paradoxus (strain S110), this protein is Glycogen synthase.